We begin with the raw amino-acid sequence, 242 residues long: tRNA pseudouridine synthase A (242 aa).

The active-site Nucleophile is Asp51. Residue Tyr107 coordinates substrate.

Belongs to the tRNA pseudouridine synthase TruA family. Homodimer.

The enzyme catalyses uridine(38/39/40) in tRNA = pseudouridine(38/39/40) in tRNA. Its function is as follows. Formation of pseudouridine at positions 38, 39 and 40 in the anticodon stem and loop of transfer RNAs. The protein is tRNA pseudouridine synthase A of Helicobacter pylori (strain Shi470).